Consider the following 197-residue polypeptide: Transcription factor FapR (197 aa).

This sequence belongs to the FapR family.

Its function is as follows. Transcriptional factor involved in regulation of membrane lipid biosynthesis by repressing genes involved in fatty acid and phospholipid metabolism. This is Transcription factor FapR from Bacillus cereus (strain B4264).